We begin with the raw amino-acid sequence, 209 residues long: MDTLWDITPAVDTATPVWPGDTPVGIERVWRMEAGSPVNVARLTMSPHTGAHTDAPLHYDAGGVAIGAVPLDSYLGRCRVIHCIGVKPLVMPDDLAGSLDGVPPRVLLRTYREAPTTFWDSGFCAVAPETIDLLAARGVKLIGIDTPSLDPQESKTMDAHHRIRAHRMAILEGIVLDAVAPGDYELIALPLKLSTLDASPVRAVLRSLT.

Position 18 (Trp-18) interacts with substrate. Positions 48, 52, and 54 each coordinate Zn(2+). His-58 (proton donor/acceptor) is an active-site residue. 2 residues coordinate Zn(2+): His-160 and Glu-172.

It belongs to the Cyclase 1 superfamily. KynB family. Homodimer. The cofactor is Zn(2+).

The enzyme catalyses N-formyl-L-kynurenine + H2O = L-kynurenine + formate + H(+). It participates in amino-acid degradation; L-tryptophan degradation via kynurenine pathway; L-kynurenine from L-tryptophan: step 2/2. Its function is as follows. Catalyzes the hydrolysis of N-formyl-L-kynurenine to L-kynurenine, the second step in the kynurenine pathway of tryptophan degradation. This is Kynurenine formamidase from Paraburkholderia phymatum (strain DSM 17167 / CIP 108236 / LMG 21445 / STM815) (Burkholderia phymatum).